An 859-amino-acid polypeptide reads, in one-letter code: Toll-like receptor 5 (859 aa).

The signal sequence occupies residues 1–26 (MACQLDLLIGVIFMASPVLVISPCSS). Residues 27-641 (DGRIAFFRGC…EEEAMRSLKF (615 aa)) lie on the Extracellular side of the membrane. Asn-37, Asn-46, and Asn-84 each carry an N-linked (GlcNAc...) asparagine glycan. LRR repeat units lie at residues 45-69 (LNTTTERLLLSFNYISMVVATSFPL), 72-94 (RLQLLELGTQYANLTIGPGAFRN), 96-118 (PNLRILDLGQSQIEVLNRDAFQG), 121-144 (HLLELRLFSCGLSSAVLSDGYFRN), 147-167 (SLARLDLSGNQIHSLRLHSSF), 172-193 (SLSDVNFAFNQIFTICEDELEP), 198-212 (TLSFFGLKLTKLFSR), 215-230 (VGWETCRNPFRGVRLE), and 235-236 (SE). Asn-246 carries an N-linked (GlcNAc...) asparagine glycan. LRR repeat units follow at residues 261–285 (LKHHIMGPGFGFQNIRDPDQSTFAS), 290–302 (SVLQLDLSHGFIF), 314–335 (DLKMLNLAFNKINKIGENAFYG), 338–356 (SLQVLNLSYNLLGELYNSN), 386–402 (TLQTLDLRDNALKAIGF), and 413–432 (GNKLVHLPHIHFTANFLELS). Asn-343 carries an N-linked (GlcNAc...) asparagine glycan. A glycan (N-linked (GlcNAc...) asparagine) is linked at Asn-438. 5 LRR repeats span residues 450–471 (QLQFLILNQNRLSSCKAAHTPS), 475–496 (SLEQLFLTENMLQLAWETGLCW), 504–525 (RLQILYLSNNYLNFLPPGIFND), 528–547 (ALRMLSLSANKLTVLSPGSL), and 550–568 (NLEILDISRNQLLCPDPAL). The 53-residue stretch at 580–632 (NEFVCNCELSTFISWLNQTNVTLFGSPADVYCMYPNSLLGGSLYNISTEDCDE) folds into the LRRCT domain. 2 disulfide bridges follow: Cys-584-Cys-611 and Cys-586-Cys-630. Asn-596, Asn-599, and Asn-624 each carry an N-linked (GlcNAc...) asparagine glycan. Residues 642–662 (SLFILCTVTLTLFLVITLVVI) form a helical membrane-spanning segment. At 663–859 (KFRGICFLCY…IQLRTIATIS (197 aa)) the chain is on the cytoplasmic side. Residues 692 to 837 (YRYDAYFCFS…WFLDKLSGCI (146 aa)) form the TIR domain. Tyr-799 is modified (phosphotyrosine).

This sequence belongs to the Toll-like receptor family. In terms of assembly, homodimer. Interacts with MYD88 (via TIR domain). Interacts with TICAM1 (via TIR domain). Interacts with UNC93B1; this interaction is essential for proper TLR5 localization to the plasma membrane. In terms of processing, phosphorylated at Tyr-799 upon flagellin binding; required for signaling. In terms of tissue distribution, highly expressed in liver. Detected in lung and at very low levels in most other tissues.

It localises to the membrane. In terms of biological role, pattern recognition receptor (PRR) located on the cell surface that participates in the activation of innate immunity and inflammatory response. Recognizes small molecular motifs named pathogen-associated molecular pattern (PAMPs) expressed by pathogens and microbe-associated molecular patterns (MAMPs) usually expressed by resident microbiota. Upon ligand binding such as bacterial flagellins, recruits intracellular adapter proteins MYD88 and TRIF leading to NF-kappa-B activation, cytokine secretion and induction of the inflammatory response. Plays thereby an important role in the relationship between the intestinal epithelium and enteric microbes and contributes to the gut microbiota composition throughout life. This is Toll-like receptor 5 (Tlr5) from Mus musculus (Mouse).